The following is a 238-amino-acid chain: Purine nucleoside phosphorylase DeoD-type (238 aa).

An a purine D-ribonucleoside-binding site is contributed by histidine 4. Residues glycine 20, arginine 24, arginine 43, and 87 to 90 (RVGS) each bind phosphate. A purine D-ribonucleoside is bound by residues 179 to 181 (EME) and 203 to 204 (SD). The active-site Proton donor is aspartate 204.

Belongs to the PNP/UDP phosphorylase family. Homohexamer; trimer of homodimers.

The catalysed reaction is a purine D-ribonucleoside + phosphate = a purine nucleobase + alpha-D-ribose 1-phosphate. The enzyme catalyses a purine 2'-deoxy-D-ribonucleoside + phosphate = a purine nucleobase + 2-deoxy-alpha-D-ribose 1-phosphate. Its function is as follows. Catalyzes the reversible phosphorolytic breakdown of the N-glycosidic bond in the beta-(deoxy)ribonucleoside molecules, with the formation of the corresponding free purine bases and pentose-1-phosphate. This Mannheimia succiniciproducens (strain KCTC 0769BP / MBEL55E) protein is Purine nucleoside phosphorylase DeoD-type.